We begin with the raw amino-acid sequence, 362 residues long: Protein MGF 360-19R (362 aa).

One copy of the ANK repeat lies at 66-98; it reads LLNTALMKAVQDNNYELIKLFTEWGANINYGLI.

It belongs to the asfivirus MGF 360 family.

Plays a role in virus cell tropism, and may be required for efficient virus replication in macrophages. This Ornithodoros (relapsing fever ticks) protein is Protein MGF 360-19R.